Reading from the N-terminus, the 199-residue chain is Ribonuclease HII (199 aa).

The 187-residue stretch at Gly13 to Gly199 folds into the RNase H type-2 domain. Asp19, Glu20, and Asp110 together coordinate a divalent metal cation.

Belongs to the RNase HII family. It depends on Mn(2+) as a cofactor. Requires Mg(2+) as cofactor.

It is found in the cytoplasm. The enzyme catalyses Endonucleolytic cleavage to 5'-phosphomonoester.. Endonuclease that specifically degrades the RNA of RNA-DNA hybrids. The polypeptide is Ribonuclease HII (Jannaschia sp. (strain CCS1)).